The sequence spans 467 residues: Serine decarboxylase 2 (467 aa).

Histidine 178 lines the substrate pocket. Lysine 290 is subject to N6-(pyridoxal phosphate)lysine.

Belongs to the group II decarboxylase family. It depends on pyridoxal 5'-phosphate as a cofactor.

It catalyses the reaction L-serine + H(+) = ethanolamine + CO2. Functionally, catalyzes the biosynthesis of ethanolamine from serine. Decarboxylation of free serine is the major source of ethanolamine production in plants and ethanolamine metabolism is crucial for the synthesis of choline, phosphatidylethanolamine (PE) and phosphatidylcholine (PC), and thus for plant growth. The protein is Serine decarboxylase 2 of Oryza sativa subsp. japonica (Rice).